Consider the following 1192-residue polypeptide: Protein WWC2 (1192 aa).

WW domains are found at residues 10–43 (LPLP…DPRD) and 57–90 (DELP…DPRK). Coiled coils occupy residues 121–194 (KEQR…YKEQ) and 224–256 (ELKS…FHLD). The residue at position 286 (S286) is a Phosphoserine. The stretch at 302–421 (LAEKVRLSLQ…KLEETTKLTT (120 aa)) forms a coiled coil. A disordered region spans residues 441–462 (SSLGSLASSRGSLNTSSRGSLN). The C2 domain maps to 698–821 (ETAQVQIGLR…FSSEVFTLWY (124 aa)). A coiled-coil region spans residues 859–887 (ALLARTSAELLAVEQELAQEEEEESGQEE). Disordered regions lie at residues 873 to 895 (QELA…DGDW) and 911 to 991 (EAEV…SRQH). The span at 875–885 (LAQEEEEESGQ) shows a compositional bias: acidic residues. A compositionally biased stretch (polar residues) spans 923–933 (TEDLSSCTSVP). Residues 938-951 (DGNRKESNCAKDLR) are compositionally biased toward basic and acidic residues. The residue at position 1004 (T1004) is a Phosphothreonine. S1022 carries the post-translational modification Phosphoserine. The tract at residues 1031–1050 (SLFVRNSTERRSLRVKRTVC) is interaction with PRKCZ. The stretch at 1068 to 1144 (DLELDLQASL…EQKQGLNAEK (77 aa)) forms a coiled coil. Positions 1124 to 1137 (QAEKQAEQSKEEQK) are enriched in basic and acidic residues. A disordered region spans residues 1124–1143 (QAEKQAEQSKEEQKQGLNAE).

The protein belongs to the WWC family. Forms homodimers and heterodimers with WWC1 and WWC3. Interacts with DLC1 and PRKCZ. Interacts (via WW domains) with LATS1 and LATS2.

Its subcellular location is the cytoplasm. The protein resides in the cytosol. Its function is as follows. Regulator of the Hippo signaling pathway, also known as the Salvador-Warts-Hippo (SWH) pathway. Enhances phosphorylation of LATS1 and YAP1 and negatively regulates cell proliferation and organ growth due to a suppression of the transcriptional activity of YAP1, the major effector of the Hippo pathway. The polypeptide is Protein WWC2 (Homo sapiens (Human)).